The sequence spans 132 residues: Small ribosomal subunit protein uS8 (132 aa).

The protein belongs to the universal ribosomal protein uS8 family. In terms of assembly, part of the 30S ribosomal subunit. Contacts proteins S5 and S12.

Its function is as follows. One of the primary rRNA binding proteins, it binds directly to 16S rRNA central domain where it helps coordinate assembly of the platform of the 30S subunit. The polypeptide is Small ribosomal subunit protein uS8 (Allorhizobium ampelinum (strain ATCC BAA-846 / DSM 112012 / S4) (Agrobacterium vitis (strain S4))).